Consider the following 160-residue polypeptide: Ribosomal RNA large subunit methyltransferase H (160 aa).

S-adenosyl-L-methionine-binding residues include Leu-76 and Gly-108.

This sequence belongs to the RNA methyltransferase RlmH family. Homodimer.

It localises to the cytoplasm. It catalyses the reaction pseudouridine(1915) in 23S rRNA + S-adenosyl-L-methionine = N(3)-methylpseudouridine(1915) in 23S rRNA + S-adenosyl-L-homocysteine + H(+). Functionally, specifically methylates the pseudouridine at position 1915 (m3Psi1915) in 23S rRNA. The protein is Ribosomal RNA large subunit methyltransferase H of Bradyrhizobium diazoefficiens (strain JCM 10833 / BCRC 13528 / IAM 13628 / NBRC 14792 / USDA 110).